Here is a 405-residue protein sequence, read N- to C-terminus: Exodeoxyribonuclease 7 large subunit (405 aa).

This sequence belongs to the XseA family. Heterooligomer composed of large and small subunits.

Its subcellular location is the cytoplasm. It carries out the reaction Exonucleolytic cleavage in either 5'- to 3'- or 3'- to 5'-direction to yield nucleoside 5'-phosphates.. Bidirectionally degrades single-stranded DNA into large acid-insoluble oligonucleotides, which are then degraded further into small acid-soluble oligonucleotides. This is Exodeoxyribonuclease 7 large subunit from Syntrophomonas wolfei subsp. wolfei (strain DSM 2245B / Goettingen).